Consider the following 445-residue polypeptide: 3-phosphoshikimate 1-carboxyvinyltransferase (445 aa).

The disordered stretch occupies residues 1-20 (MSTSAAPTPLESRASGPLSG). 3-phosphoshikimate is bound by residues lysine 28, serine 29, and arginine 33. Lysine 28 contributes to the phosphoenolpyruvate binding site. Phosphoenolpyruvate contacts are provided by glycine 101 and arginine 129. 4 residues coordinate 3-phosphoshikimate: serine 175, glutamine 177, aspartate 328, and lysine 355. Residue glutamine 177 participates in phosphoenolpyruvate binding. Aspartate 328 acts as the Proton acceptor in catalysis. Phosphoenolpyruvate contacts are provided by arginine 359 and arginine 402.

Belongs to the EPSP synthase family. Monomer.

The protein resides in the cytoplasm. It catalyses the reaction 3-phosphoshikimate + phosphoenolpyruvate = 5-O-(1-carboxyvinyl)-3-phosphoshikimate + phosphate. Its pathway is metabolic intermediate biosynthesis; chorismate biosynthesis; chorismate from D-erythrose 4-phosphate and phosphoenolpyruvate: step 6/7. Functionally, catalyzes the transfer of the enolpyruvyl moiety of phosphoenolpyruvate (PEP) to the 5-hydroxyl of shikimate-3-phosphate (S3P) to produce enolpyruvyl shikimate-3-phosphate and inorganic phosphate. The sequence is that of 3-phosphoshikimate 1-carboxyvinyltransferase from Bradyrhizobium sp. (strain ORS 278).